The chain runs to 146 residues: Large-conductance mechanosensitive channel (146 aa).

The next 3 helical transmembrane spans lie at 17-37, 40-60, and 89-109; these read IDLAVGVIIGGAFGKIVDSLV, IIMPLITVITGGGVDFTQKFV, and LTILINFIILAWVVFLMVKLI.

The protein belongs to the MscL family. Homopentamer.

Its subcellular location is the cell inner membrane. Channel that opens in response to stretch forces in the membrane lipid bilayer. May participate in the regulation of osmotic pressure changes within the cell. This chain is Large-conductance mechanosensitive channel, found in Acinetobacter baylyi (strain ATCC 33305 / BD413 / ADP1).